A 79-amino-acid polypeptide reads, in one-letter code: Sec-independent protein translocase protein TatA (79 aa).

The chain crosses the membrane as a helical span at residues 1-21; the sequence is MGSFSIWHWLIVLAIVVLVFG. Residues 43-79 are disordered; that stretch reads VKDGSTSTDTPAAAPGQVAGQTAADKTTIDVEAKQKG. Positions 69-79 are enriched in basic and acidic residues; it reads TTIDVEAKQKG.

It belongs to the TatA/E family. As to quaternary structure, the Tat system comprises two distinct complexes: a TatABC complex, containing multiple copies of TatA, TatB and TatC subunits, and a separate TatA complex, containing only TatA subunits. Substrates initially bind to the TatABC complex, which probably triggers association of the separate TatA complex to form the active translocon.

It is found in the cell inner membrane. Functionally, part of the twin-arginine translocation (Tat) system that transports large folded proteins containing a characteristic twin-arginine motif in their signal peptide across membranes. TatA could form the protein-conducting channel of the Tat system. This Delftia acidovorans (strain DSM 14801 / SPH-1) protein is Sec-independent protein translocase protein TatA.